The sequence spans 132 residues: 3-aminoacrylate deaminase RutC (132 aa).

Belongs to the RutC family.

It catalyses the reaction (Z)-3-aminoacrylate + H2O + H(+) = 3-oxopropanoate + NH4(+). Functionally, involved in pyrimidine catabolism. Catalyzes the deamination of 3-aminoacrylate to malonic semialdehyde, a reaction that can also occur spontaneously. RutC may facilitate the reaction and modulate the metabolic fitness, rather than catalyzing essential functions. The polypeptide is 3-aminoacrylate deaminase RutC (Cronobacter sakazakii (strain ATCC BAA-894) (Enterobacter sakazakii)).